A 372-amino-acid polypeptide reads, in one-letter code: Alanine dehydrogenase 2 (372 aa).

The active site involves His95. 169 to 199 (KVTIIGGGQAGTNAAKIALGLGADVTILDVN) lines the NAD(+) pocket.

The protein belongs to the AlaDH/PNT family.

It carries out the reaction L-alanine + NAD(+) + H2O = pyruvate + NH4(+) + NADH + H(+). It functions in the pathway amino-acid degradation; L-alanine degradation via dehydrogenase pathway; NH(3) and pyruvate from L-alanine: step 1/1. Functionally, may play a role in cell wall synthesis as L-alanine is an important constituent of the peptidoglycan layer. In Staphylococcus aureus (strain COL), this protein is Alanine dehydrogenase 2 (ald2).